We begin with the raw amino-acid sequence, 300 residues long: tRNA dimethylallyltransferase (300 aa).

Position 11-18 (11-18 (GPTAVGKS)) interacts with ATP. Substrate is bound at residue 13 to 18 (TAVGKS). Residues 35 to 38 (DSIQ) are interaction with substrate tRNA.

This sequence belongs to the IPP transferase family. In terms of assembly, monomer. It depends on Mg(2+) as a cofactor.

It catalyses the reaction adenosine(37) in tRNA + dimethylallyl diphosphate = N(6)-dimethylallyladenosine(37) in tRNA + diphosphate. Functionally, catalyzes the transfer of a dimethylallyl group onto the adenine at position 37 in tRNAs that read codons beginning with uridine, leading to the formation of N6-(dimethylallyl)adenosine (i(6)A). This chain is tRNA dimethylallyltransferase, found in Borrelia recurrentis (strain A1).